Consider the following 343-residue polypeptide: Cytoplasmic tRNA 2-thiolation protein 1 (343 aa).

Belongs to the TtcA family. CTU1/NCS6/ATPBD3 subfamily.

Its subcellular location is the cytoplasm. Its pathway is tRNA modification; 5-methoxycarbonylmethyl-2-thiouridine-tRNA biosynthesis. Its function is as follows. Plays a central role in 2-thiolation of mcm(5)S(2)U at tRNA wobble positions of tRNA(Lys), tRNA(Glu) and tRNA(Gln). Directly binds tRNAs and probably acts by catalyzing adenylation of tRNAs, an intermediate required for 2-thiolation. It is unclear whether it acts as a sulfurtransferase that transfers sulfur from thiocarboxylated URM1 onto the uridine of tRNAs at wobble position. The protein is Cytoplasmic tRNA 2-thiolation protein 1 of Drosophila sechellia (Fruit fly).